The primary structure comprises 206 residues: Small ribosomal subunit protein uS4 (206 aa).

The 61-residue stretch at N96 to K156 folds into the S4 RNA-binding domain.

The protein belongs to the universal ribosomal protein uS4 family. Part of the 30S ribosomal subunit. Contacts protein S5. The interaction surface between S4 and S5 is involved in control of translational fidelity.

One of the primary rRNA binding proteins, it binds directly to 16S rRNA where it nucleates assembly of the body of the 30S subunit. Its function is as follows. With S5 and S12 plays an important role in translational accuracy. This Buchnera aphidicola subsp. Baizongia pistaciae (strain Bp) protein is Small ribosomal subunit protein uS4.